Reading from the N-terminus, the 429-residue chain is Phosphomethylpyrimidine synthase (429 aa).

Substrate-binding positions include N66, M94, Y123, H162, 184–186 (SRG), 225–228 (DALR), and E264. H268 is a binding site for Zn(2+). Y291 contacts substrate. Residue H332 participates in Zn(2+) binding. [4Fe-4S] cluster contacts are provided by C408, C411, and C415.

The protein belongs to the ThiC family. [4Fe-4S] cluster serves as cofactor.

The catalysed reaction is 5-amino-1-(5-phospho-beta-D-ribosyl)imidazole + S-adenosyl-L-methionine = 4-amino-2-methyl-5-(phosphooxymethyl)pyrimidine + CO + 5'-deoxyadenosine + formate + L-methionine + 3 H(+). The protein operates within cofactor biosynthesis; thiamine diphosphate biosynthesis. Functionally, catalyzes the synthesis of the hydroxymethylpyrimidine phosphate (HMP-P) moiety of thiamine from aminoimidazole ribotide (AIR) in a radical S-adenosyl-L-methionine (SAM)-dependent reaction. The polypeptide is Phosphomethylpyrimidine synthase (Sulfurisphaera tokodaii (strain DSM 16993 / JCM 10545 / NBRC 100140 / 7) (Sulfolobus tokodaii)).